Here is a 190-residue protein sequence, read N- to C-terminus: Segregation and condensation protein B (190 aa).

Belongs to the ScpB family. Homodimer. Homodimerization may be required to stabilize the binding of ScpA to the Smc head domains. Component of a cohesin-like complex composed of ScpA, ScpB and the Smc homodimer, in which ScpA and ScpB bind to the head domain of Smc. The presence of the three proteins is required for the association of the complex with DNA.

Its subcellular location is the cytoplasm. In terms of biological role, participates in chromosomal partition during cell division. May act via the formation of a condensin-like complex containing Smc and ScpA that pull DNA away from mid-cell into both cell halves. This is Segregation and condensation protein B from Bacillus cereus (strain AH187).